Reading from the N-terminus, the 207-residue chain is Holliday junction branch migration complex subunit RuvA (207 aa).

Positions 1–65 are domain I; the sequence is MYDYIRGILT…ETEHVLYGFS (65 aa). Positions 66-144 are domain II; the sequence is SRRERECFRM…DLLPLDSKAI (79 aa). Residues 145-155 are flexible linker; it reads ASWESVKPSCM. Residues 155-207 are domain III; that stretch reads MDEGIQALAALGYSKPSAERMIAEAMSELPENASLAEILPIALKKNLQGLNKS.

Belongs to the RuvA family. In terms of assembly, homotetramer. Forms an RuvA(8)-RuvB(12)-Holliday junction (HJ) complex. HJ DNA is sandwiched between 2 RuvA tetramers; dsDNA enters through RuvA and exits via RuvB. An RuvB hexamer assembles on each DNA strand where it exits the tetramer. Each RuvB hexamer is contacted by two RuvA subunits (via domain III) on 2 adjacent RuvB subunits; this complex drives branch migration. In the full resolvosome a probable DNA-RuvA(4)-RuvB(12)-RuvC(2) complex forms which resolves the HJ.

Its subcellular location is the cytoplasm. Functionally, the RuvA-RuvB-RuvC complex processes Holliday junction (HJ) DNA during genetic recombination and DNA repair, while the RuvA-RuvB complex plays an important role in the rescue of blocked DNA replication forks via replication fork reversal (RFR). RuvA specifically binds to HJ cruciform DNA, conferring on it an open structure. The RuvB hexamer acts as an ATP-dependent pump, pulling dsDNA into and through the RuvAB complex. HJ branch migration allows RuvC to scan DNA until it finds its consensus sequence, where it cleaves and resolves the cruciform DNA. The protein is Holliday junction branch migration complex subunit RuvA of Chlamydia caviae (strain ATCC VR-813 / DSM 19441 / 03DC25 / GPIC) (Chlamydophila caviae).